Here is a 392-residue protein sequence, read N- to C-terminus: Casein kinase II subunit alpha (392 aa).

The Protein kinase domain maps to 39 to 324; sequence YQLVRKLGRG…AREAMDHPYF (286 aa). Residues 45–53 and K68 contribute to the ATP site; that span reads LGRGKYSEV. D156 (proton acceptor) is an active-site residue. The interval 334–355 is disordered; it reads MGGSNMPSGSSTPVSSASMMSG. Low complexity predominate over residues 337-354; it reads SNMPSGSSTPVSSASMMS.

The protein belongs to the protein kinase superfamily. Ser/Thr protein kinase family. CK2 subfamily. Tetramer composed of an alpha chain, an alpha' and two beta chains.

It is found in the nucleus. The catalysed reaction is L-seryl-[protein] + ATP = O-phospho-L-seryl-[protein] + ADP + H(+). The enzyme catalyses L-threonyl-[protein] + ATP = O-phospho-L-threonyl-[protein] + ADP + H(+). Functionally, catalytic subunit of a constitutively active serine/threonine-protein kinase complex that phosphorylates a large number of substrates containing acidic residues C-terminal to the phosphorylated serine or threonine. Regulates numerous cellular processes, such as cell cycle progression, apoptosis and transcription, as well as viral infection. May act as a regulatory node which integrates and coordinates numerous signals leading to an appropriate cellular response. During mitosis, functions as a component of the p53/TP53-dependent spindle assembly checkpoint (SAC) that maintains cyclin-B-CDK1 activity and G2 arrest in response to spindle damage. Can also negatively regulate apoptosis. Phosphorylates the caspases CASP9 and CASP2 and the apoptotic regulator NOL3. Phosphorylation protects CASP9 from cleavage and activation by CASP8, and inhibits the dimerization of CASP2 and activation of CASP8. Plays an important role in the circadian clock function by phosphorylating BMAL1. The protein is Casein kinase II subunit alpha (csnk2a1) of Xenopus laevis (African clawed frog).